We begin with the raw amino-acid sequence, 374 residues long: MSVPAFIDITEEDQAAELRAYLKSKGAEISEENSEGGLHVDLAQIIEVCDVCLKEDDKDVESVMNSVVSLLLILEPDKQEALIESLCEKLVKFREGERPSLRLQLLSNLFHGMDKNTPVRYTVYCSLLKVASSCGAIQYIPTELDQVRKWISDWNLSTDKKHTLLRLLYDVLVDCKKSDTAAKVMVELLGSYTEDNASQARVDAHRCIVRALKDPNTFLFDHLLALKPVKFLEGELIHDLLTIFVSAKLVSYVKFYQNNKDFIDSLGLLHEQNMAKMRLLTFMGMAVENKEISFDTMQQELQIGADDVEAFVIDAVKTKMVYCKIDQTQRKVVVSHSTHRTFGKQQWQQLYDTLNTWKQNLNQVKNSLLSLSDT.

Residues 180–339 form the PCI domain; it reads TAAKVMVELL…RKVVVSHSTH (160 aa).

It belongs to the eIF-3 subunit M family. Component of the eukaryotic translation initiation factor 3 (eIF-3) complex, which is composed of 13 subunits: EIF3A, EIF3B, EIF3C, EIF3D, EIF3E, EIF3F, EIF3G, EIF3H, EIF3I, EIF3J, EIF3K, EIF3L and EIF3M.

The protein resides in the cytoplasm. In terms of biological role, component of the eukaryotic translation initiation factor 3 (eIF-3) complex, which is involved in protein synthesis of a specialized repertoire of mRNAs and, together with other initiation factors, stimulates binding of mRNA and methionyl-tRNAi to the 40S ribosome. The eIF-3 complex specifically targets and initiates translation of a subset of mRNAs involved in cell proliferation. The protein is Eukaryotic translation initiation factor 3 subunit M of Gallus gallus (Chicken).